Consider the following 426-residue polypeptide: 3-phosphoshikimate 1-carboxyvinyltransferase (426 aa).

3 residues coordinate 3-phosphoshikimate: Lys22, Ser23, and Arg27. Lys22 provides a ligand contact to phosphoenolpyruvate. Phosphoenolpyruvate-binding residues include Gly96 and Arg124. 3-phosphoshikimate-binding residues include Ser170, Ser171, Gln172, Ser198, Asp314, Asn337, and Lys341. Residue Gln172 participates in phosphoenolpyruvate binding. Asp314 acts as the Proton acceptor in catalysis. Residues Arg345, Arg387, and Lys412 each coordinate phosphoenolpyruvate.

The protein belongs to the EPSP synthase family. In terms of assembly, monomer.

It is found in the cytoplasm. It catalyses the reaction 3-phosphoshikimate + phosphoenolpyruvate = 5-O-(1-carboxyvinyl)-3-phosphoshikimate + phosphate. It participates in metabolic intermediate biosynthesis; chorismate biosynthesis; chorismate from D-erythrose 4-phosphate and phosphoenolpyruvate: step 6/7. Functionally, catalyzes the transfer of the enolpyruvyl moiety of phosphoenolpyruvate (PEP) to the 5-hydroxyl of shikimate-3-phosphate (S3P) to produce enolpyruvyl shikimate-3-phosphate and inorganic phosphate. This chain is 3-phosphoshikimate 1-carboxyvinyltransferase, found in Vibrio campbellii (strain ATCC BAA-1116).